We begin with the raw amino-acid sequence, 820 residues long: Phenylalanine--tRNA ligase beta subunit (820 aa).

In terms of domain architecture, tRNA-binding spans 42–154 (KGGLEGLVIG…AEAVPGTLAK (113 aa)). The B5 domain occupies 413–489 (PQDFMVELSY…RIYGYNNVEI (77 aa)). Residues aspartate 467, aspartate 473, glutamate 476, and aspartate 477 each contribute to the Mg(2+) site. Residues 727–820 (SKFPAVKRDL…LEDKLNAKLR (94 aa)) enclose the FDX-ACB domain.

This sequence belongs to the phenylalanyl-tRNA synthetase beta subunit family. Type 1 subfamily. In terms of assembly, tetramer of two alpha and two beta subunits. It depends on Mg(2+) as a cofactor.

It localises to the cytoplasm. It catalyses the reaction tRNA(Phe) + L-phenylalanine + ATP = L-phenylalanyl-tRNA(Phe) + AMP + diphosphate + H(+). This is Phenylalanine--tRNA ligase beta subunit from Bacteroides thetaiotaomicron (strain ATCC 29148 / DSM 2079 / JCM 5827 / CCUG 10774 / NCTC 10582 / VPI-5482 / E50).